The following is a 226-amino-acid chain: Lipoprotein-releasing system ATP-binding protein LolD (226 aa).

Residues 5 to 225 form the ABC transporter domain; that stretch reads FALSNISKFF…EINSCMLSSV (221 aa). 40–47 contributes to the ATP binding site; it reads GRSGSGKS.

This sequence belongs to the ABC transporter superfamily. Lipoprotein translocase (TC 3.A.1.125) family. As to quaternary structure, the complex is composed of two ATP-binding proteins (LolD) and two transmembrane proteins (LolC and LolE).

The protein resides in the cell inner membrane. Part of the ABC transporter complex LolCDE involved in the translocation of mature outer membrane-directed lipoproteins, from the inner membrane to the periplasmic chaperone, LolA. Responsible for the formation of the LolA-lipoprotein complex in an ATP-dependent manner. The sequence is that of Lipoprotein-releasing system ATP-binding protein LolD from Ehrlichia canis (strain Jake).